We begin with the raw amino-acid sequence, 119 residues long: uncharacterized protein (119 aa).

This is an uncharacterized protein from Dactylococcopsis salina (Myxobaktron salinum).